A 114-amino-acid chain; its full sequence is Lectin MVL (114 aa).

Residues 2–55 (ASYKVNIPAGPLWSNAEAQQVGPKIAAAHQGNFTGQWTTVVESAMSVVEVELQV) form repeat 1. Residues 12–16 (PLWSN), Gln20, and 36–44 (GQWTTVVES) each bind a carbohydrate. Positions 56–60 (ENTGI) are linker. Repeat 2 spans residues 61–114 (HEFKTDVLAGPLWSNDEAQKLGPQIAASYGAEFTGQWRTIVEGVMSVIQIKYTF). Residues 71–75 (PLWSN), Gln79, and 95–103 (GQWRTIVEG) contribute to the a carbohydrate site.

Homodimer.

It is found in the cytoplasm. In terms of biological role, carbohydrate-binding protein that binds oligomannosides such as Man(6)GlcNAc(2) with sub-micromolar affinities. The specificity of MVL is unique in that its minimal target comprises the Man-alpha-(1-&gt;6)-Man-beta-(1-&gt;4)-GlcNAc-beta-(1-&gt;4)-GlcNAc tetrasaccharide core (Man(2)A) found in N-linked oligomannosides. Displays hemagglutininating activity on rabbit, horse and hen erythrocytes. This activity is inhibited by yeast mannan. Does not bind mono- and disaccharides. Inhibits HIV-1 envelope-mediated cell fusion at nanomolar concentrations through carbohydrate-mediated interactions with high-mannose residues on the surface of the HIV envelope glycoprotein gp120. Unexpectedly for a lectin, one of the 2 oligomannose binding sites of MVL can catalyze the cleavage of chitin fragments (such as chitotriose, i.e. GlcNAc(3) or GlcNAc-beta-(1-&gt;4)-GlcNAcbeta-(1-&gt;4)-GlcNAc, and chitotetraose, i.e. GlcNAc(4)) to GlcNAc. This weak beta-1,4-glycosidase activity is restricted to the C-terminal carbohydrate-binding site. Does not cleave Man(3)GlcNAc(2) or the tetrasaccharide Man(2)A. The polypeptide is Lectin MVL (mvl) (Microcystis viridis (Polycystis viridis)).